The sequence spans 113 residues: U11-theraphotoxin-Hhn1t (113 aa).

Residues 1–21 form the signal peptide; that stretch reads MNTVRVTFLLVFVLAVSLGQA. A propeptide spanning residues 22-74 is cleaved from the precursor; the sequence is DKDENRMEMQEKTEQGKSYLDFAENLLLQKLEELEAKLLEEDSEESRNSRQKR. Basic and acidic residues predominate over residues 60–69; the sequence is LEEDSEESRN. A disordered region spans residues 60-83; the sequence is LEEDSEESRNSRQKRCIGEGVPCD. Disulfide bonds link C75/C90, C82/C95, and C89/C110.

The protein belongs to the neurotoxin 14 (magi-1) family. 01 (HNTX-16) subfamily. As to expression, expressed by the venom gland.

It localises to the secreted. Probable ion channel inhibitor. This chain is U11-theraphotoxin-Hhn1t, found in Cyriopagopus hainanus (Chinese bird spider).